The sequence spans 113 residues: Large ribosomal subunit protein uL22 (113 aa).

It belongs to the universal ribosomal protein uL22 family. Part of the 50S ribosomal subunit.

Functionally, this protein binds specifically to 23S rRNA; its binding is stimulated by other ribosomal proteins, e.g. L4, L17, and L20. It is important during the early stages of 50S assembly. It makes multiple contacts with different domains of the 23S rRNA in the assembled 50S subunit and ribosome. The globular domain of the protein is located near the polypeptide exit tunnel on the outside of the subunit, while an extended beta-hairpin is found that lines the wall of the exit tunnel in the center of the 70S ribosome. This chain is Large ribosomal subunit protein uL22, found in Syntrophomonas wolfei subsp. wolfei (strain DSM 2245B / Goettingen).